Here is a 649-residue protein sequence, read N- to C-terminus: ENTH domain-containing protein C19F8.03c (649 aa).

The 135-residue stretch at 2–136 folds into the ENTH domain; sequence SPSKWLLTYE…VDYAQVGDAP (135 aa). Disordered regions lie at residues 280–382, 409–440, and 590–649; these read YLQN…NELE, LSAE…PNDS, and FTHG…PFRS. 2 positions are modified to phosphoserine: Ser-285 and Ser-287. A compositionally biased stretch (basic residues) spans 299–308; it reads PTLRKKKSIP. Composition is skewed to polar residues over residues 313 to 326 and 340 to 349; these read ESSS…TVQQ and PETQRTTSRI. A compositionally biased stretch (acidic residues) spans 352–381; that stretch reads QEEEIKEEEMEGEEEEEEEEVPNYESENEL. Composition is skewed to polar residues over residues 409–418, 614–624, and 635–649; these read LSAEGTSASP, TPYTASKNPFS, and ARNS…PFRS. Thr-414 carries the phosphothreonine modification. Ser-417 is subject to Phosphoserine.

The protein localises to the cytoplasm. The polypeptide is ENTH domain-containing protein C19F8.03c (Schizosaccharomyces pombe (strain 972 / ATCC 24843) (Fission yeast)).